The primary structure comprises 321 residues: Lipoyl synthase (321 aa).

Residues C68, C73, C79, C94, C98, C101, and S308 each contribute to the [4Fe-4S] cluster site. Positions F80–T297 constitute a Radical SAM core domain.

This sequence belongs to the radical SAM superfamily. Lipoyl synthase family. The cofactor is [4Fe-4S] cluster.

The protein localises to the cytoplasm. The enzyme catalyses [[Fe-S] cluster scaffold protein carrying a second [4Fe-4S](2+) cluster] + N(6)-octanoyl-L-lysyl-[protein] + 2 oxidized [2Fe-2S]-[ferredoxin] + 2 S-adenosyl-L-methionine + 4 H(+) = [[Fe-S] cluster scaffold protein] + N(6)-[(R)-dihydrolipoyl]-L-lysyl-[protein] + 4 Fe(3+) + 2 hydrogen sulfide + 2 5'-deoxyadenosine + 2 L-methionine + 2 reduced [2Fe-2S]-[ferredoxin]. Its pathway is protein modification; protein lipoylation via endogenous pathway; protein N(6)-(lipoyl)lysine from octanoyl-[acyl-carrier-protein]: step 2/2. Functionally, catalyzes the radical-mediated insertion of two sulfur atoms into the C-6 and C-8 positions of the octanoyl moiety bound to the lipoyl domains of lipoate-dependent enzymes, thereby converting the octanoylated domains into lipoylated derivatives. This Shewanella woodyi (strain ATCC 51908 / MS32) protein is Lipoyl synthase.